Reading from the N-terminus, the 170-residue chain is Bifunctional protein PyrR (170 aa).

The PRPP-binding signature appears at 90-102; the sequence is LVLIDDVLMSGRT.

It belongs to the purine/pyrimidine phosphoribosyltransferase family. PyrR subfamily.

It catalyses the reaction UMP + diphosphate = 5-phospho-alpha-D-ribose 1-diphosphate + uracil. Regulates the transcription of the pyrimidine nucleotide (pyr) operon in response to exogenous pyrimidines. In terms of biological role, also displays a weak uracil phosphoribosyltransferase activity which is not physiologically significant. This chain is Bifunctional protein PyrR, found in Pseudomonas savastanoi pv. phaseolicola (strain 1448A / Race 6) (Pseudomonas syringae pv. phaseolicola (strain 1448A / Race 6)).